Here is an 88-residue protein sequence, read N- to C-terminus: Sec-independent protein translocase protein TatA (88 aa).

A helical transmembrane segment spans residues 1-21 (MGGASIWHWIVVGVIVMLLFG). Residues 62 to 88 (TEPVRTLPPHPTEPAPATHATVDRKVV) form a disordered region.

Belongs to the TatA/E family. The Tat system comprises two distinct complexes: a TatABC complex, containing multiple copies of TatA, TatB and TatC subunits, and a separate TatA complex, containing only TatA subunits. Substrates initially bind to the TatABC complex, which probably triggers association of the separate TatA complex to form the active translocon.

The protein localises to the cell inner membrane. In terms of biological role, part of the twin-arginine translocation (Tat) system that transports large folded proteins containing a characteristic twin-arginine motif in their signal peptide across membranes. TatA could form the protein-conducting channel of the Tat system. The sequence is that of Sec-independent protein translocase protein TatA from Methylobacterium sp. (strain 4-46).